Consider the following 73-residue polypeptide: Long neurotoxin 1 (73 aa).

Intrachain disulfides connect C3–C21, C14–C42, C27–C31, C46–C57, and C58–C63.

The protein belongs to the three-finger toxin family. Long-chain subfamily. Type II alpha-neurotoxin sub-subfamily. In terms of tissue distribution, expressed by the venom gland.

The protein resides in the secreted. Its function is as follows. Binds with high affinity to muscular (alpha-1/CHRNA1) and neuronal (alpha-7/CHRNA7) nicotinic acetylcholine receptor (nAChR) and inhibits acetylcholine from binding to the receptor, thereby impairing neuromuscular and neuronal transmission. This Ophiophagus hannah (King cobra) protein is Long neurotoxin 1.